A 192-amino-acid polypeptide reads, in one-letter code: Vascular endothelial growth factor A (192 aa).

Residues 1-26 (MNFLLTWIHWGLAALLYFHNAKVLQA) form the signal peptide. 3 disulfides stabilise this stretch: Cys-52-Cys-94, Cys-83-Cys-128, and Cys-87-Cys-130. N-linked (GlcNAc...) asparagine glycosylation occurs at Asn-101.

This sequence belongs to the PDGF/VEGF growth factor family. As to quaternary structure, homodimer; disulfide-linked. Also found as heterodimer with PGF. Interacts with FLT1/VEGFR1 and KDR/VEGFR2 receptors, heparan sulfate and heparin. As to expression, expressed by the venom gland, and probably other tissues.

It localises to the secreted. Its function is as follows. Growth factor active in angiogenesis, vasculogenesis and endothelial cell growth. Induces endothelial cell proliferation, promotes cell migration, inhibits apoptosis and induces permeabilization of blood vessels. This chain is Vascular endothelial growth factor A, found in Agkistrodon piscivorus piscivorus (Eastern cottonmouth).